A 429-amino-acid chain; its full sequence is UPF0597 protein BT_2080 (429 aa).

Belongs to the UPF0597 family.

The sequence is that of UPF0597 protein BT_2080 from Bacteroides thetaiotaomicron (strain ATCC 29148 / DSM 2079 / JCM 5827 / CCUG 10774 / NCTC 10582 / VPI-5482 / E50).